We begin with the raw amino-acid sequence, 222 residues long: Chymotrypsin-1 (222 aa).

Residues 1–221 (IVGGKDAPVG…FVSWINANLK (221 aa)) form the Peptidase S1 domain. An intrachain disulfide couples C26 to C42. Residues H41 and D87 each act as charge relay system in the active site. 2 cysteine pairs are disulfide-bonded: C151–C164 and C174–C198. S178 (charge relay system) is an active-site residue.

This sequence belongs to the peptidase S1 family.

It is found in the secreted. Its subcellular location is the extracellular space. It carries out the reaction Preferential cleavage: Tyr-|-Xaa, Trp-|-Xaa, Phe-|-Xaa, Leu-|-Xaa.. This is Chymotrypsin-1 from Solenopsis invicta (Red imported fire ant).